We begin with the raw amino-acid sequence, 53 residues long: Tryptophan RNA-binding attenuator protein inhibitory protein (53 aa).

CXXCXGXG motif repeat units follow at residues 12–19 (CPKCERAG) and 26–33 (CPACSGKG).

As to quaternary structure, homopentamer or homohexamer.

The protein localises to the cytoplasm. Functionally, by forming a complex with tryptophan-activated TRAP, and masking its RNA binding site, it inhibits TRAP's RNA binding ability, thereby abolishing TRAP regulation of gene expression, leading to antitermination and increased trp operon expression. AT acts by competing with messenger RNA for the RNA binding domain of TRAP. This is Tryptophan RNA-binding attenuator protein inhibitory protein (rtpA) from Bacillus subtilis (strain 168).